Here is a 461-residue protein sequence, read N- to C-terminus: Acetylcholine receptor subunit alpha (461 aa).

An N-terminal signal peptide occupies residues 1 to 24 (MILCSYWHVGLVLLLFSCCGLVLG). At 25–234 (SEHETRLVAN…ITYHFIMQRI (210 aa)) the chain is on the extracellular side. Cystine bridges form between Cys152/Cys166 and Cys216/Cys217. Asn165 carries an N-linked (GlcNAc...) asparagine glycan. Helical transmembrane passes span 235–259 (PLYFVVNVIIPCLLFSFLTVLVFYL), 267–285 (MTLSISVLLSLTVFLLVIV), and 301–320 (YMLFTMIFVISSIIVTVVVI). Residues 321 to 432 (NTHHRSPSTH…WKYVAMVIDH (112 aa)) lie on the Cytoplasmic side of the membrane. The helical transmembrane segment at 433–451 (ILLCVFMLICIIGTVSVFA) threads the bilayer.

The protein belongs to the ligand-gated ion channel (TC 1.A.9) family. Acetylcholine receptor (TC 1.A.9.1) subfamily. Alpha-1/CHRNA1 sub-subfamily. Pentamer of two alpha chains, and one each of the beta, delta, and gamma chains.

It is found in the postsynaptic cell membrane. The protein resides in the cell membrane. It carries out the reaction K(+)(in) = K(+)(out). The enzyme catalyses Na(+)(in) = Na(+)(out). Functionally, upon acetylcholine binding, the AChR responds by an extensive change in conformation that affects all subunits and leads to opening of an ion-conducting channel across the plasma membrane. The polypeptide is Acetylcholine receptor subunit alpha (CHRNA1) (Torpedo marmorata (Marbled electric ray)).